Reading from the N-terminus, the 485-residue chain is Protein disulfide isomerase-like 5-4 (485 aa).

The Thioredoxin domain maps to 114-263; it reads VPTGSEFHPG…LVAAMETYVA (150 aa). The active-site Nucleophile is the Cys-170. A helical membrane pass occupies residues 444–464; the sequence is FSHFITNVCAIIGGVFTVAGI.

The protein belongs to the protein disulfide isomerase family.

The protein localises to the membrane. In terms of biological role, acts as a protein-folding catalyst that interacts with nascent polypeptides to catalyze the formation, isomerization, and reduction or oxidation of disulfide bonds. May play a role in storage protein biogenesis. In Oryza sativa subsp. japonica (Rice), this protein is Protein disulfide isomerase-like 5-4 (PDIL5-4).